The primary structure comprises 1238 residues: MVQTIPIKPADVSWTDDQWKAIYASGQDTLVSAAAGSGKTAVLINRMIEKVIATDNPINVDELLVVTFTNASAAEMRHRMSEALEKAIVENPTSSHLRRQLSLINKAQISTLHSFCLAIVKQYAYLLDIDPGFRIANEAEVALLRDDIVADVLEGAYDSEEETQVQAIYRLVDSFTSDRDDQAIETLISKLYDTSRVHAEPQRWLWSLPKAYELAEEVTIDDLELSHYVKLTVRHSLEEAFVLISEMRAITLQPDGPAPYAETAEIDFAMIQEGIRISQEGTWQELFDYFATVKWSTLKRVSKDALVDVELQELAKKKREAAKKIMNKMKETYFIRTPARLLEEIRLMAPIIGTLVELTTIFSEQFRLAKLERGIIDFSDLEHYALQILTVEVDGELQPSPVALDLKKRFKEVLVDEYQDTNMLQETILQLVKSGEEQDGNLFMVGDVKQSIYRFRLAEPKLFMRKYSEFLETPDATGMRIDLNANFRSRKEVLNVTNYIFAQIMGERVGEILYDDNASLKPAAPYDEKEVPVELVVMHPPQDEETVDEQEDKTDEASELEELKKSQYEARFIIDRIRQMMEDGTTVYDTKSMTERPLKYSDIVILMRSMTWSTDLVEEFKLAGIPLYAESSKGYFDALEVMIILNVLKVVDNPYQDIPLASVLRAPFVGLTENELAKIRLADSKVPFYDALRQFIRSEGQGVQTTTFEKLQRFMLAFENWRDLARRGSLSDLIWKIYLDTHYYEMVGAMPNGKQRQANLRILHDRALMYEQTAFRGLFRFLRFIDRMRTRGDDLGTAKSIGEKDDVVRLVTIHSSKGLEYPVVFVAGMGRPFNKMDFHHPYLFDQDFGLAVKAIDPENRITYTSLPFLALKEKKELEMRAEEMRVLYVAMTRAKERLILVGSVKNWEKTRDNWQDAQNIPSDAPLQEYLRARANSYLDWIGPAVARHGDFASQATTSYKELDSPSHWWIQPIDTRHYSYDIQAFNDEIQQHLTTQEDEALLSEIKARFHAQYTYQKSTRKRSKTSVSEIKRLENLQRQEEPEYYFATPAKRTSTSIAPRPTFLQDQQLTGTEIGTAVHTVMQHIPQFGFDTIEAVKGFVANLVAKQLLTEAEGKVVPIKKVYHFFHTEIGQRFKQARQIRREMPFTISRVDEDGDAQIVQGIIDCLFEDEYGNWVLLDYKTDRILPHFAKEPALTKEIMGRYAVQLRVYSEAIESILQIKVSEKVLYLFDNEQTVQA.

Positions 12-490 (VSWTDDQWKA…IDLNANFRSR (479 aa)) constitute a UvrD-like helicase ATP-binding domain. 33-40 (AAAGSGKT) serves as a coordination point for ATP. One can recognise a UvrD-like helicase C-terminal domain in the interval 510–818 (GEILYDDNAS…RLVTIHSSKG (309 aa)).

It belongs to the helicase family. AddA subfamily. Heterodimer of AddA and AddB/RexB. Mg(2+) serves as cofactor.

It catalyses the reaction Couples ATP hydrolysis with the unwinding of duplex DNA by translocating in the 3'-5' direction.. It carries out the reaction ATP + H2O = ADP + phosphate + H(+). The heterodimer acts as both an ATP-dependent DNA helicase and an ATP-dependent, dual-direction single-stranded exonuclease. Recognizes the chi site generating a DNA molecule suitable for the initiation of homologous recombination. The AddA nuclease domain is required for chi fragment generation; this subunit has the helicase and 3' -&gt; 5' nuclease activities. The sequence is that of ATP-dependent helicase/nuclease subunit A from Lysinibacillus sphaericus (strain C3-41).